The primary structure comprises 148 residues: uncharacterized protein (148 aa).

Residues 1-21 form a helical membrane-spanning segment; it reads MLQNYAIVLGMAVAVAIWYFF. Residues 27-61 form a disordered region; sequence APPGPNPPKPDPPKPDPPKMHMPKKKPHWMDPHLT.

The protein localises to the host membrane. This is an uncharacterized protein from Frog virus 3 (isolate Goorha) (FV-3).